A 202-amino-acid polypeptide reads, in one-letter code: Tetranectin (202 aa).

The signal sequence occupies residues 1 to 21; sequence MGFWGTYLLFCLFSFLSQLTA. 3 disulfide bridges follow: Cys-71/Cys-81, Cys-98/Cys-197, and Cys-173/Cys-189. In terms of domain architecture, C-type lectin spans 77–198; that stretch reads VNLKCLLAFT…CRDQLPYICQ (122 aa).

As to quaternary structure, homotrimer. In terms of tissue distribution, highest expression in lung, skeletal muscle and heart. Expressed in retina.

Its subcellular location is the secreted. Its function is as follows. Tetranectin binds to plasminogen and to isolated kringle 4. May be involved in the packaging of molecules destined for exocytosis. Plays a role in retinal function. The polypeptide is Tetranectin (Clec3b) (Mus musculus (Mouse)).